The sequence spans 58 residues: Large ribosomal subunit protein uL30 (58 aa).

The protein belongs to the universal ribosomal protein uL30 family. As to quaternary structure, part of the 50S ribosomal subunit.

The chain is Large ribosomal subunit protein uL30 from Pseudomonas entomophila (strain L48).